A 238-amino-acid chain; its full sequence is Splicing regulator RBM11 (238 aa).

Residues 10–87 enclose the RRM domain; the sequence is RTVFVGNLEA…RPINVQYRFG (78 aa). Positions 172-238 are disordered; it reads ALNHSPGPEA…CRKCKKKKRY (67 aa). The Bipartite nuclear localization signal signature appears at 202–237; the sequence is NKRKRQRPDSDSDSSSEDKRGNEGSQKCRKCKKKKR. Over residues 228–238 the composition is skewed to basic residues; the sequence is KCRKCKKKKRY.

Homodimer. As to expression, selectively expressed in brain, cerebellum and testis, and to a lower extent in kidney.

The protein resides in the nucleus. The protein localises to the nucleoplasm. It is found in the nucleus speckle. Its function is as follows. Tissue-specific splicing factor with potential implication in the regulation of alternative splicing during neuron and germ cell differentiation. Antagonizes SRSF1-mediated BCL-X splicing. May affect the choice of alternative 5' splice sites by binding to specific sequences in exons and antagonizing the SR protein SRSF1. The protein is Splicing regulator RBM11 (Rbm11) of Mus musculus (Mouse).